The sequence spans 358 residues: Bis(monoacylglycero)phosphate synthase CLN5 (358 aa).

Residues 1–23 (MAQVGSAGPGACGRRGAGAGAGP) are disordered. At 1-29 (MAQVGSAGPGACGRRGAGAGAGPERTTWR) the chain is on the cytoplasmic side. The segment covering 7–21 (AGPGACGRRGAGAGA) has biased composition (gly residues). A helical; Signal-anchor for type II membrane protein membrane pass occupies residues 30–46 (WAPALLWLATAAAVAGD). Residues 47–358 (PSRRQWPVPY…NRKNRTLSGL (312 aa)) lie on the Lumenal side of the membrane. Cystine bridges form between Cys-69-Cys-158 and Cys-76-Cys-164. The active-site Proton acceptor is His-116. Residues Asn-129, Asn-142, Asn-177, and Asn-202 are each glycosylated (N-linked (GlcNAc...) asparagine). The Nucleophile; Acyl-thioester intermediate role is filled by Cys-230. N-linked (GlcNAc...) asparagine glycans are attached at residues Asn-254, Asn-270, and Asn-280. Positions 303–342 (FLLSLLQIFDAVVIHREFYLFYNFEYWFLPMKYPFIKITY) are membrane-anchoring. N-linked (GlcNAc...) asparagine glycosylation is present at Asn-352.

This sequence belongs to the CLN5 family. As to quaternary structure, multimer. Interacts with SORT1, RAB5A and RAB7A. Interacts with PPT1, TPP1, CLN3, CLN6, CLN8, ATP5F1A and ATP5F1B. Post-translationally, N-glycosylated with both high mannose and complex type sugars. Glycosylation is important for proper folding and trafficking to the lysosomes. The type II membrane signal anchor is proteolytically cleaved to produce a mature form that is transported to the lysosomes (Bis(monoacylglycero)phosphate synthase CLN5, secreted form). In terms of processing, can undergo proteolytic cleavage at the C-terminus, probably by a cysteine protease and may involve the removal of approximately 10-15 residues from the C-terminal end.

The protein resides in the lysosome. Its subcellular location is the membrane. The enzyme catalyses S-hexadecanoyl-L-cysteinyl-[protein] + H2O = L-cysteinyl-[protein] + hexadecanoate + H(+). The catalysed reaction is 2 1-acyl-sn-glycero-3-phospho-(1'-sn-glycerol) = 1-acyl-sn-glycero-3-phospho-(3'-acyl-sn-1'-glycerol) + sn-glycero-3-phospho-(1'-sn-glycerol). It carries out the reaction 2 1-(9Z-octadecenoyl)-sn-glycero-3-phospho-(1'-sn-glycerol) = 1-(9Z-octadecenoyl)-sn-glycero-3-phospho-(3'-(9Z-octadecenoyl)-1'-sn-glycerol) + sn-glycero-3-phospho-(1'-sn-glycerol). It catalyses the reaction 2 1-octadecanoyl-sn-glycero-3-phospho-(1'-sn-glycerol) = 1-octadecanoyl-sn-glycero-3-phospho-(3'-octadecanoyl-1'-sn-glycerol) + sn-glycero-3-phospho-(1'-sn-glycerol). The enzyme catalyses 2 1-hexadecanoyl-sn-glycero-3-phospho-(1'-sn-glycerol) = 1-hexadecanoyl-sn-glycero-3-phospho-(3'-hexadecanoyl-1'-sn-glycerol) + sn-glycero-3-phospho-(1'-sn-glycerol). The catalysed reaction is 2 1-tetradecanoyl-sn-glycero-3-phospho-(1'-sn-glycerol) = 1-tetradecanoyl-sn-glycero-3-phospho-(3'-tetradecanoyl-1'-sn-glycerol) + sn-glycero-3-phospho-(1'-sn-glycerol). Its function is as follows. Catalyzes the synthesis of bis(monoacylglycero)phosphate (BMP) via transacylation of 2 molecules of lysophosphatidylglycerol (LPG). BMP also known as lysobisphosphatidic acid plays a key role in the formation of intraluminal vesicles and in maintaining intracellular cholesterol homeostasis. Can use only LPG as the exclusive lysophospholipid acyl donor for base exchange and displays BMP synthase activity towards various LPGs (LPG 14:0, LPG 16:0, LPG 18:0, LPG 18:1) with a higher preference for longer chain lengths. Plays a role in influencing the retrograde trafficking of lysosomal sorting receptors SORT1 and IGF2R from the endosomes to the trans-Golgi network by controlling the recruitment of retromer complex to the endosomal membrane. Regulates the localization and activation of RAB7A which is required to recruit the retromer complex to the endosomal membrane. In terms of biological role, exhibits palmitoyl protein thioesterase (S-depalmitoylation) activity in vitro and most likely plays a role in protein S-depalmitoylation. The sequence is that of Bis(monoacylglycero)phosphate synthase CLN5 (CLN5) from Bos taurus (Bovine).